The primary structure comprises 391 residues: uncharacterized protein (391 aa).

Residues 247–387 (AVIVYATIYS…KIKEFGRKLA (141 aa)) form the Flavodoxin-like domain.

This is an uncharacterized protein from Methanocaldococcus jannaschii (strain ATCC 43067 / DSM 2661 / JAL-1 / JCM 10045 / NBRC 100440) (Methanococcus jannaschii).